The primary structure comprises 494 residues: Protein nucleotidyltransferase YdiU (494 aa).

Residues Gly99, Gly101, Arg102, Lys118, Asp130, Gly131, Arg181, and Arg188 each coordinate ATP. Asp261 serves as the catalytic Proton acceptor. Mg(2+) is bound by residues Asn262 and Asp271. Asp271 is an ATP binding site.

The protein belongs to the SELO family. Requires Mg(2+) as cofactor. Mn(2+) is required as a cofactor.

It carries out the reaction L-seryl-[protein] + ATP = 3-O-(5'-adenylyl)-L-seryl-[protein] + diphosphate. It catalyses the reaction L-threonyl-[protein] + ATP = 3-O-(5'-adenylyl)-L-threonyl-[protein] + diphosphate. The catalysed reaction is L-tyrosyl-[protein] + ATP = O-(5'-adenylyl)-L-tyrosyl-[protein] + diphosphate. The enzyme catalyses L-histidyl-[protein] + UTP = N(tele)-(5'-uridylyl)-L-histidyl-[protein] + diphosphate. It carries out the reaction L-seryl-[protein] + UTP = O-(5'-uridylyl)-L-seryl-[protein] + diphosphate. It catalyses the reaction L-tyrosyl-[protein] + UTP = O-(5'-uridylyl)-L-tyrosyl-[protein] + diphosphate. Its function is as follows. Nucleotidyltransferase involved in the post-translational modification of proteins. It can catalyze the addition of adenosine monophosphate (AMP) or uridine monophosphate (UMP) to a protein, resulting in modifications known as AMPylation and UMPylation. The sequence is that of Protein nucleotidyltransferase YdiU from Variovorax paradoxus (strain S110).